A 142-amino-acid polypeptide reads, in one-letter code: Large ribosomal subunit protein uL13 (142 aa).

It belongs to the universal ribosomal protein uL13 family. As to quaternary structure, part of the 50S ribosomal subunit.

Functionally, this protein is one of the early assembly proteins of the 50S ribosomal subunit, although it is not seen to bind rRNA by itself. It is important during the early stages of 50S assembly. In Thioalkalivibrio sulfidiphilus (strain HL-EbGR7), this protein is Large ribosomal subunit protein uL13.